The chain runs to 516 residues: MSRKKLPIGIQTFAKIREGDDYYYVDKTGFALQLIEQGTHYFLSRPRRFGKSLFLDTLAELFAGNEPLFRGLQVHDRWDWSRRHPVLRISFGGGVIRDAQDLEGKIAELLTINEQALGIACTQRENRARFGELIRQAHAAGGERVVVLVDEYDKPILDNLTRPEIAREIRDGLRNLYSVIKDSDAHVRFAMLSGVSKFSKVSLFSGLNNLDDISVDSRYSALCGYTETDVDAVFAPELPGLDRDEIRAWYNGYNWTGEAVYNPFDLLLLFQKREFRPYWFETGTPTFLVDLLTERRAFTPALEQVMATDALLSAFEVGDISTEALMFQAGYLTIGQVQRIGAQPRYRLRYPNLEVKASLNEALLLRYLPEPASVMRQTGQLYDLLLANDFPGLQTLFTAFFASIPHDWYRNNPIARYEGYYASVFYSHFAALGLDVRLEDATSHGRIDMTVLFNGHVYLFEFKVVELTPAGQALQQLKDKGYADKYRARGEPIHLLGVEFSRDSRSVVGFVVESLG.

This is an uncharacterized protein from Azotobacter chroococcum mcd 1.